Consider the following 376-residue polypeptide: 1-deoxy-D-xylulose 5-phosphate reductoisomerase (376 aa).

NADPH contacts are provided by Ser10, Gly11, Ser12, Val13, Gly36, Lys37, Asn38, and Asn118. Position 119 (Lys119) interacts with 1-deoxy-D-xylulose 5-phosphate. Glu120 lines the NADPH pocket. Asp144 contributes to the Mn(2+) binding site. Ser145, Glu146, Ser170, and His193 together coordinate 1-deoxy-D-xylulose 5-phosphate. Residue Glu146 coordinates Mn(2+). NADPH is bound at residue Gly199. 1-deoxy-D-xylulose 5-phosphate contacts are provided by Ser206, Asn211, Lys212, and Glu215. Position 215 (Glu215) interacts with Mn(2+).

This sequence belongs to the DXR family. Requires Mg(2+) as cofactor. Mn(2+) is required as a cofactor.

The catalysed reaction is 2-C-methyl-D-erythritol 4-phosphate + NADP(+) = 1-deoxy-D-xylulose 5-phosphate + NADPH + H(+). The protein operates within isoprenoid biosynthesis; isopentenyl diphosphate biosynthesis via DXP pathway; isopentenyl diphosphate from 1-deoxy-D-xylulose 5-phosphate: step 1/6. Catalyzes the NADPH-dependent rearrangement and reduction of 1-deoxy-D-xylulose-5-phosphate (DXP) to 2-C-methyl-D-erythritol 4-phosphate (MEP). This is 1-deoxy-D-xylulose 5-phosphate reductoisomerase from Macrococcus caseolyticus (strain JCSC5402) (Macrococcoides caseolyticum).